A 118-amino-acid chain; its full sequence is Protein YLR162W (118 aa).

A compositionally biased stretch (polar residues) spans Met-1 to Ser-20. Residues Met-1 to Pro-26 are disordered. Residues Leu-38 to Ala-58 traverse the membrane as a helical segment.

It is found in the membrane. In terms of biological role, overexpression confers resistance to the antimicrobial peptide MiAMP1. This chain is Protein YLR162W, found in Saccharomyces cerevisiae (strain ATCC 204508 / S288c) (Baker's yeast).